A 304-amino-acid chain; its full sequence is Quorum-quenching protein AidA (304 aa).

It belongs to the AB hydrolase superfamily.

In terms of biological role, involved in quorum quenching (QQ). Inhibits motility and biofilm formation. Could contribute in bacterial competition, as it is capable of hydrolyzing the signaling molecules that mediate interspecies communication. This is Quorum-quenching protein AidA from Acinetobacter baumannii (strain MDR-ZJ06).